A 261-amino-acid chain; its full sequence is Phosphate import ATP-binding protein PstB 1 (261 aa).

One can recognise an ABC transporter domain in the interval 8–256 (IKVNNLSFYY…PHDSRTREYV (249 aa)). 40 to 47 (GPSGCGKS) serves as a coordination point for ATP.

The protein belongs to the ABC transporter superfamily. Phosphate importer (TC 3.A.1.7) family. The complex is composed of two ATP-binding proteins (PstB), two transmembrane proteins (PstC and PstA) and a solute-binding protein (PstS).

The protein resides in the cell inner membrane. The catalysed reaction is phosphate(out) + ATP + H2O = ADP + 2 phosphate(in) + H(+). Part of the ABC transporter complex PstSACB involved in phosphate import. Responsible for energy coupling to the transport system. This is Phosphate import ATP-binding protein PstB 1 from Nostoc sp. (strain PCC 7120 / SAG 25.82 / UTEX 2576).